Here is a 916-residue protein sequence, read N- to C-terminus: Phosphoenolpyruvate carboxylase (916 aa).

Catalysis depends on residues H144 and K578.

This sequence belongs to the PEPCase type 1 family. Requires Mg(2+) as cofactor.

It carries out the reaction oxaloacetate + phosphate = phosphoenolpyruvate + hydrogencarbonate. In terms of biological role, forms oxaloacetate, a four-carbon dicarboxylic acid source for the tricarboxylic acid cycle. In Aromatoleum aromaticum (strain DSM 19018 / LMG 30748 / EbN1) (Azoarcus sp. (strain EbN1)), this protein is Phosphoenolpyruvate carboxylase.